A 224-amino-acid chain; its full sequence is Enolase-phosphatase E1 (224 aa).

The protein belongs to the HAD-like hydrolase superfamily. MasA/MtnC family. Monomer. Mg(2+) serves as cofactor.

It catalyses the reaction 5-methylsulfanyl-2,3-dioxopentyl phosphate + H2O = 1,2-dihydroxy-5-(methylsulfanyl)pent-1-en-3-one + phosphate. It functions in the pathway amino-acid biosynthesis; L-methionine biosynthesis via salvage pathway; L-methionine from S-methyl-5-thio-alpha-D-ribose 1-phosphate: step 3/6. Its pathway is amino-acid biosynthesis; L-methionine biosynthesis via salvage pathway; L-methionine from S-methyl-5-thio-alpha-D-ribose 1-phosphate: step 4/6. Functionally, bifunctional enzyme that catalyzes the enolization of 2,3-diketo-5-methylthiopentyl-1-phosphate (DK-MTP-1-P) into the intermediate 2-hydroxy-3-keto-5-methylthiopentenyl-1-phosphate (HK-MTPenyl-1-P), which is then dephosphorylated to form the acireductone 1,2-dihydroxy-3-keto-5-methylthiopentene (DHK-MTPene). This Thioalkalivibrio sulfidiphilus (strain HL-EbGR7) protein is Enolase-phosphatase E1.